A 1388-amino-acid chain; its full sequence is CRISPR-associated endonuclease Cas9 2 (1388 aa).

Catalysis depends on aspartate 10, which acts as the For RuvC-like nuclease domain. Aspartate 10, glutamate 763, and glutamate 767 together coordinate Mg(2+). Positions 771-928 (TNQGKSNSQQ…DKAGFIQRQL (158 aa)) constitute an HNH Cas9-type domain. Catalysis depends on histidine 847, which acts as the Proton acceptor for HNH nuclease domain. Residue histidine 990 participates in Mg(2+) binding. A compositionally biased stretch (basic and acidic residues) spans 1100–1109 (EQNHGLDRGK). Residues 1100–1130 (EQNHGLDRGKPKGLFNANLSSKPKPNSNENL) are disordered. The PAM-interacting domain (PI) stretch occupies residues 1102–1388 (NHGLDRGKPK…RIDLAKLGEG (287 aa)). Positions 1116 to 1129 (ANLSSKPKPNSNEN) are enriched in polar residues.

Belongs to the CRISPR-associated protein Cas9 family. Subtype II-A subfamily. In terms of assembly, monomer. Binds crRNA and tracrRNA. Requires Mg(2+) as cofactor.

Functionally, CRISPR (clustered regularly interspaced short palindromic repeat) is an adaptive immune system that provides protection against mobile genetic elements (viruses, transposable elements and conjugative plasmids). CRISPR clusters contain spacers, sequences complementary to antecedent mobile elements, and target invading nucleic acids. CRISPR clusters are transcribed and processed into CRISPR RNA (crRNA). In type II CRISPR systems correct processing of pre-crRNA requires a trans-encoded small RNA (tracrRNA), endogenous ribonuclease 3 (rnc) and this protein. The tracrRNA serves as a guide for ribonuclease 3-aided processing of pre-crRNA. Subsequently Cas9/crRNA/tracrRNA endonucleolytically cleaves linear or circular dsDNA target complementary to the spacer yielding blunt ends; Cas9 is inactive in the absence of the 2 guide RNAs (gRNA). Cas9 recognizes a 3'-G-rich protospacer adjacent motif (PAM, GGG in this organism) in the CRISPR repeat sequences to help distinguish self versus nonself, as targets within the bacterial CRISPR locus do not have PAMs. PAM recognition is also required for catalytic activity. Complements the gRNA coprocessing defect in a cas9 deletion in S.pyogenes strain 370, and cuts target DNA in Cas9:gRNAs mixing experiments with S.mutans strain UA159. The chain is CRISPR-associated endonuclease Cas9 2 from Streptococcus thermophilus (strain ATCC BAA-491 / LMD-9).